Consider the following 241-residue polypeptide: Tetrahydromethanopterin S-methyltransferase subunit A (241 aa).

At 1-220 (MAEKKEPAEG…HSGVLAGKIE (220 aa)) the chain is on the cytoplasmic side. A 5-hydroxybenzimidazolylcob(I)amide-binding site is contributed by His-85. The helical transmembrane segment at 221–241 (GIMVGLVLSLFVLGLLLFGGM) threads the bilayer.

The protein belongs to the MtrA family. In terms of assembly, the complex is composed of 8 subunits; MtrA, MtrB, MtrC, MtrD, MtrE, MtrF, MtrG and MtrH. It depends on 5-hydroxybenzimidazolylcob(I)amide as a cofactor.

The protein localises to the cell membrane. It catalyses the reaction 5-methyl-5,6,7,8-tetrahydromethanopterin + coenzyme M + 2 Na(+)(in) = 5,6,7,8-tetrahydromethanopterin + methyl-coenzyme M + 2 Na(+)(out). It participates in one-carbon metabolism; methanogenesis from CO(2); methyl-coenzyme M from 5,10-methylene-5,6,7,8-tetrahydromethanopterin: step 2/2. Functionally, part of a complex that catalyzes the formation of methyl-coenzyme M and tetrahydromethanopterin from coenzyme M and methyl-tetrahydromethanopterin. This is an energy-conserving, sodium-ion translocating step. The polypeptide is Tetrahydromethanopterin S-methyltransferase subunit A (Methanohalobium evestigatum (strain ATCC BAA-1072 / DSM 3721 / NBRC 107634 / OCM 161 / Z-7303)).